Consider the following 338-residue polypeptide: Large ribosomal subunit protein uL10 (338 aa).

The segment at 295-338 is disordered; the sequence is EVPTIQPTTPPEKKEEEEKKEEEEEEAETVSEEELAEGLGALFG. Over residues 312-330 the composition is skewed to acidic residues; sequence EKKEEEEEEAETVSEEELA.

This sequence belongs to the universal ribosomal protein uL10 family. Part of the 50S ribosomal subunit. Forms part of the ribosomal stalk which helps the ribosome interact with GTP-bound translation factors. Forms a heptameric L10(L12)2(L12)2(L12)2 complex, where L10 forms an elongated spine to which the L12 dimers bind in a sequential fashion.

Forms part of the ribosomal stalk, playing a central role in the interaction of the ribosome with GTP-bound translation factors. This Staphylothermus marinus (strain ATCC 43588 / DSM 3639 / JCM 9404 / F1) protein is Large ribosomal subunit protein uL10.